Consider the following 630-residue polypeptide: Biosynthetic arginine decarboxylase (630 aa).

Residue Lys99 is modified to N6-(pyridoxal phosphate)lysine. 279–289 (FDVGGGLGVDY) is a binding site for substrate.

This sequence belongs to the Orn/Lys/Arg decarboxylase class-II family. SpeA subfamily. Mg(2+) serves as cofactor. The cofactor is pyridoxal 5'-phosphate.

It carries out the reaction L-arginine + H(+) = agmatine + CO2. Its pathway is amine and polyamine biosynthesis; agmatine biosynthesis; agmatine from L-arginine: step 1/1. Functionally, catalyzes the biosynthesis of agmatine from arginine. The chain is Biosynthetic arginine decarboxylase from Neisseria meningitidis serogroup B (strain ATCC BAA-335 / MC58).